A 412-amino-acid chain; its full sequence is MDPEAFSASLFKWDPRGAMPPPNRLLEAVAPPQPPPPPLPPPQPLPPAYSIRTRELGGLEEMFQAYGIRYYTAAKITELGFTVNTLLDMKDDELDDMMNSLSQIFRWELLVGERYGIKAAIRAERRRLEEEEGRRRHILSDGGTNVLDALSQEGLSEEPVQQQEREAAGSGGGGTAWEVVAPGGGRMRQRRRKKVVVGRERRGSSMEEDEDTEEGQEDNEDYNINNEGGGGISERQREHPFIVTEPGEVARGKKNGLDYLFHLYEQCRDFLIQVQNIAKERGEKCPTKVTNQVFRFAKKAGASYINKPKMRHYVHCYALHCLDEDASNALRRAFKERGENVGAWRQACYKPLVAIAARQGWDIDAIFNGHPRLSIWYVPTKLRQLCHSERSNAAAAASTSVSGGGVDHLPHF.

Disordered stretches follow at residues 1-47 (MDPE…PLPP) and 154-234 (GLSE…GISE). Positions 31 to 47 (PPQPPPPPLPPPQPLPP) are enriched in pro residues. Residues 187 to 196 (MRQRRRKKVV) are compositionally biased toward basic residues. Residues 206-221 (MEEDEDTEEGQEDNED) are compositionally biased toward acidic residues. 3 consecutive DNA-binding regions follow at residues 237-241 (REHPF), 306-313 (NKPKMRHY), and 377-380 (YVPT).

Belongs to the FLO/LFY family. As to expression, expressed in the floral meristem and also in the vegetative meristem.

It localises to the nucleus. In terms of biological role, probable transcription factor required for the specification of floral meristem identity. The chain is Protein ALF (ALF) from Petunia hybrida (Petunia).